The chain runs to 129 residues: NADH-quinone oxidoreductase subunit A (129 aa).

The next 3 helical transmembrane spans lie at 9–29 (FPIG…LGLA), 68–88 (LLFI…VLLL), and 97–117 (LGWP…AGLV).

Belongs to the complex I subunit 3 family. As to quaternary structure, NDH-1 is composed of 14 different subunits. Subunits NuoA, H, J, K, L, M, N constitute the membrane sector of the complex.

Its subcellular location is the cell inner membrane. The enzyme catalyses a quinone + NADH + 5 H(+)(in) = a quinol + NAD(+) + 4 H(+)(out). In terms of biological role, NDH-1 shuttles electrons from NADH, via FMN and iron-sulfur (Fe-S) centers, to quinones in the respiratory chain. The immediate electron acceptor for the enzyme in this species is believed to be ubiquinone. Couples the redox reaction to proton translocation (for every two electrons transferred, four hydrogen ions are translocated across the cytoplasmic membrane), and thus conserves the redox energy in a proton gradient. The sequence is that of NADH-quinone oxidoreductase subunit A from Anaeromyxobacter dehalogenans (strain 2CP-C).